The following is a 357-amino-acid chain: S-adenosylmethionine:tRNA ribosyltransferase-isomerase (357 aa).

The protein belongs to the QueA family. In terms of assembly, monomer.

The protein resides in the cytoplasm. The enzyme catalyses 7-aminomethyl-7-carbaguanosine(34) in tRNA + S-adenosyl-L-methionine = epoxyqueuosine(34) in tRNA + adenine + L-methionine + 2 H(+). Its pathway is tRNA modification; tRNA-queuosine biosynthesis. Its function is as follows. Transfers and isomerizes the ribose moiety from AdoMet to the 7-aminomethyl group of 7-deazaguanine (preQ1-tRNA) to give epoxyqueuosine (oQ-tRNA). The chain is S-adenosylmethionine:tRNA ribosyltransferase-isomerase from Edwardsiella ictaluri (strain 93-146).